We begin with the raw amino-acid sequence, 232 residues long: Ethylene-responsive transcription factor ERF025 (232 aa).

Positions 1 to 29 are enriched in polar residues; it reads MSNNNNSPTTVNQETTTSREVSITLPTDQ. Positions 1–63 are disordered; it reads MSNNNNSPTT…TATGLSGKHS (63 aa). A compositionally biased stretch (low complexity) spans 30-50; it reads SPQTSPGSSSSPSPRPSGGSP. Positions 64-120 form a DNA-binding region, AP2/ERF; that stretch reads IFRGIRLRNGKWVSEIREPRKTTRIWLGTYPVPEMAAAAYDVAALALKGPDAVLNFP. Positions 213 to 232 are disordered; sequence PTMEDDSPENHEGDNLWSYK.

Belongs to the AP2/ERF transcription factor family. ERF subfamily.

The protein localises to the nucleus. In terms of biological role, probably acts as a transcriptional activator. Binds to the GCC-box pathogenesis-related promoter element. May be involved in the regulation of gene expression by stress factors and by components of stress signal transduction pathways. The polypeptide is Ethylene-responsive transcription factor ERF025 (ERF025) (Arabidopsis thaliana (Mouse-ear cress)).